The sequence spans 404 residues: Zinc finger TRAF-type-containing protein 1 (404 aa).

Residues 1-13 are compositionally biased toward gly residues; the sequence is MSGAEEAGGGGPA. A disordered region spans residues 1–22; that stretch reads MSGAEEAGGGGPAAGPAGSVPA. An RING-type; degenerate zinc finger spans residues 111 to 156; the sequence is CTVCLDLPKASVYQCTNGHLMCAGCFIHLLADARLKEEQATCPNCR. The segment at 152 to 225 adopts a TRAF-type zinc-finger fold; that stretch reads CPNCRCEISK…PWHGPFHELT (74 aa).

It belongs to the ZFTRAF1 family. Interacts with LGALS3.

It is found in the cytoplasm. The protein localises to the perinuclear region. This is Zinc finger TRAF-type-containing protein 1 from Homo sapiens (Human).